Consider the following 416-residue polypeptide: Pigment epithelium-derived factor (416 aa).

A signal peptide spans 1 to 20 (MQALVLLLWTGALLGFGRCQ). Residues S112 and S225 each carry the phosphoserine modification. Residue N283 is glycosylated (N-linked (GlcNAc...) asparagine).

The protein belongs to the serpin family. As to quaternary structure, interacts with PNPLA2; this interaction stimulates the phospholipase A2 activity of PNPLA2. In terms of tissue distribution, retinal pigment epithelial cells. Located in the interphotoreceptor matrix (IPM) which is between the retinal pigment epithelium and the neural retina.

The protein localises to the secreted. The protein resides in the melanosome. Neurotrophic protein; induces extensive neuronal differentiation in retinoblastoma cells. Potent inhibitor of angiogenesis. As it does not undergo the S (stressed) to R (relaxed) conformational transition characteristic of active serpins, it exhibits no serine protease inhibitory activity. This chain is Pigment epithelium-derived factor (SERPINF1), found in Bos taurus (Bovine).